The chain runs to 129 residues: UPF0148 protein AF_2370 (129 aa).

The tract at residues 61–80 is disordered; it reads SAAKAESEEKPPESTKPAVK.

Belongs to the UPF0148 family.

The polypeptide is UPF0148 protein AF_2370 (Archaeoglobus fulgidus (strain ATCC 49558 / DSM 4304 / JCM 9628 / NBRC 100126 / VC-16)).